The sequence spans 349 residues: UDP-3-O-acylglucosamine N-acyltransferase (349 aa).

Residue His-243 is the Proton acceptor of the active site.

This sequence belongs to the transferase hexapeptide repeat family. LpxD subfamily. As to quaternary structure, homotrimer.

It carries out the reaction a UDP-3-O-[(3R)-3-hydroxyacyl]-alpha-D-glucosamine + a (3R)-hydroxyacyl-[ACP] = a UDP-2-N,3-O-bis[(3R)-3-hydroxyacyl]-alpha-D-glucosamine + holo-[ACP] + H(+). Its pathway is bacterial outer membrane biogenesis; LPS lipid A biosynthesis. Functionally, catalyzes the N-acylation of UDP-3-O-acylglucosamine using 3-hydroxyacyl-ACP as the acyl donor. Is involved in the biosynthesis of lipid A, a phosphorylated glycolipid that anchors the lipopolysaccharide to the outer membrane of the cell. The chain is UDP-3-O-acylglucosamine N-acyltransferase from Myxococcus xanthus (strain DK1622).